We begin with the raw amino-acid sequence, 610 residues long: C4b-binding protein alpha chain (610 aa).

Positions 1 to 48 (MKHQRVPVMILHSKGTMASWPFSRLWSISDPILFQVTLVATLLATVLG) are cleaved as a signal peptide. 8 consecutive Sushi domains span residues 49–109 (SCGI…FCVK), 110–171 (KRCE…QCII), 172–236 (AKCE…SCKK), 237–296 (VICV…TCEL), 297–364 (NGCL…ECKE), 365–427 (VCCP…ECRP), 428–485 (DCKS…QCKA), and 486–543 (LCLK…KCEW). Intrachain disulfides connect cysteine 50–cysteine 95, cysteine 80–cysteine 107, cysteine 112–cysteine 153, cysteine 139–cysteine 169, cysteine 174–cysteine 217, cysteine 203–cysteine 234, cysteine 239–cysteine 281, cysteine 267–cysteine 294, cysteine 299–cysteine 350, cysteine 334–cysteine 362, cysteine 367–cysteine 412, cysteine 402–cysteine 425, cysteine 429–cysteine 471, cysteine 457–cysteine 483, cysteine 487–cysteine 528, and cysteine 514–cysteine 541. The N-linked (GlcNAc...) asparagine glycan is linked to asparagine 66. Asparagine 221 carries an N-linked (GlcNAc...) asparagine glycan. Residues asparagine 525 and asparagine 602 are each glycosylated (N-linked (GlcNAc...) asparagine).

In terms of assembly, disulfide-linked complex of alpha and beta chains.

It localises to the secreted. In terms of biological role, controls the classical pathway of complement activation. It binds as a cofactor to C3b/C4b inactivator (C3bINA), which then hydrolyzes the complement fragment C4b. It also accelerates the degradation of the C4bC2a complex (C3 convertase) by dissociating the complement fragment C2a. Alpha chain binds C4b. It also interacts with serum amyloid P component. This chain is C4b-binding protein alpha chain (C4BPA), found in Bos taurus (Bovine).